Reading from the N-terminus, the 310-residue chain is Aspartate carbamoyltransferase catalytic subunit (310 aa).

Arg-58 and Thr-59 together coordinate carbamoyl phosphate. Lys-86 contacts L-aspartate. Arg-108, His-136, and Gln-139 together coordinate carbamoyl phosphate. Arg-169 and Arg-224 together coordinate L-aspartate. Gly-265 and Pro-266 together coordinate carbamoyl phosphate.

It belongs to the aspartate/ornithine carbamoyltransferase superfamily. ATCase family. In terms of assembly, heterododecamer (2C3:3R2) of six catalytic PyrB chains organized as two trimers (C3), and six regulatory PyrI chains organized as three dimers (R2).

The catalysed reaction is carbamoyl phosphate + L-aspartate = N-carbamoyl-L-aspartate + phosphate + H(+). Its pathway is pyrimidine metabolism; UMP biosynthesis via de novo pathway; (S)-dihydroorotate from bicarbonate: step 2/3. Catalyzes the condensation of carbamoyl phosphate and aspartate to form carbamoyl aspartate and inorganic phosphate, the committed step in the de novo pyrimidine nucleotide biosynthesis pathway. This chain is Aspartate carbamoyltransferase catalytic subunit, found in Citrifermentans bemidjiense (strain ATCC BAA-1014 / DSM 16622 / JCM 12645 / Bem) (Geobacter bemidjiensis).